The chain runs to 505 residues: 6-phosphofructo-2-kinase/fructose-2,6-bisphosphatase 2 (505 aa).

The segment at 1 to 20 (MSGASSSEQNNNSYETKTPN) is disordered. Ser2 bears the N-acetylserine mark. The tract at residues 2–248 (SGASSSEQNN…VYYLMNIHVQ (247 aa)) is 6-phosphofructo-2-kinase. Residue Ser29 is modified to Phosphoserine; by PKA. 45-53 (GLPARGKTY) provides a ligand contact to ATP. Beta-D-fructose 6-phosphate-binding residues include Arg78 and Arg102. Asp128 is an active-site residue. Beta-D-fructose 6-phosphate contacts are provided by Thr130 and Arg136. Cys158 is an active-site residue. 167–172 (NILEVK) is a binding site for ATP. Residues Lys172, Arg193, and Tyr197 each coordinate beta-D-fructose 6-phosphate. The fructose-2,6-bisphosphatase stretch occupies residues 249 to 505 (PRTIYLCRHG…RAQDMQEGAD (257 aa)). Residue Arg256 participates in beta-D-fructose 2,6-bisphosphate binding. His257 functions as the Tele-phosphohistidine intermediate in the catalytic mechanism. Residues Asn263 and Gly269 each contribute to the beta-D-fructose 2,6-bisphosphate site. Residue Glu326 is the Proton donor/acceptor of the active site. Residues Tyr337, Arg351, Lys355, Tyr366, Gln392, and Arg396 each coordinate beta-D-fructose 2,6-bisphosphate. 348–351 (FALR) contributes to the ATP binding site. Residues 392-396 (QAVMR) and Tyr428 each bind ATP. Positions 445–505 (HRDKPTNNFP…RAQDMQEGAD (61 aa)) are disordered. The span at 450 to 476 (TNNFPKNQTPVRMRRNSFTPLSSSNTI) shows a compositional bias: polar residues. Position 466 is a phosphoserine; by AMPK (Ser466). Phosphothreonine is present on residues Thr468 and Thr475. Phosphoserine; by BRAF is present on Ser483. Residues Ser486 and Ser493 each carry the phosphoserine modification.

The protein in the C-terminal section; belongs to the phosphoglycerate mutase family. In terms of assembly, homodimer. Forms a heterodimer with PFKFB3. Post-translationally, phosphorylation by AMPK stimulates activity. As to expression, heart.

The enzyme catalyses beta-D-fructose 2,6-bisphosphate + H2O = beta-D-fructose 6-phosphate + phosphate. It carries out the reaction beta-D-fructose 6-phosphate + ATP = beta-D-fructose 2,6-bisphosphate + ADP + H(+). Its activity is regulated as follows. Phosphorylation results in the activation of the kinase activity. Functionally, synthesis and degradation of fructose 2,6-bisphosphate. In Homo sapiens (Human), this protein is 6-phosphofructo-2-kinase/fructose-2,6-bisphosphatase 2.